The chain runs to 266 residues: Calpain small subunit 1 (266 aa).

Position 1 is an N-acetylmethionine (M1). Phosphoserine is present on S6. One can recognise an EF-hand 1; atypical domain in the interval 94–128; it reads EEVRQFRRLFAQLAGDDMEVSATELMNILNKVVTR. The Ca(2+) site is built by A107, D110, E112, E117, D135, D150, D152, T154, K156, and E161. 4 consecutive EF-hand domains span residues 137-170, 167-202, 203-231, and 232-266; these read FGIDTCRSMVAVMDSDTTGKLGFEEFKYLWNNIK, NNIKKWQAIYKQFDVDRSGTIGSSELPGAFEAAGFH, LNEHLYSMIIRRYSDEGGNMDFDNFISCL, and VRLDAMFRAFKSLDKDGTGQIQVNIQEWLQLTMYS. N6-acetyllysine is present on K177. Positions 180, 182, 184, 186, 191, and 223 each coordinate Ca(2+).

Homodimer or heterodimer of a large (catalytic) and a small (regulatory) subunit. In presence of calcium, the heterodimer dissociates.

The protein localises to the cytoplasm. It localises to the cell membrane. Functionally, regulatory subunit of the calcium-regulated non-lysosomal thiol-protease which catalyzes limited proteolysis of substrates involved in cytoskeletal remodeling and signal transduction. Essential for embryonic development. The sequence is that of Calpain small subunit 1 (CAPNS1) from Sus scrofa (Pig).